The chain runs to 148 residues: Leghemoglobin 29 (148 aa).

The 147-residue stretch at glutamate 2–serine 148 folds into the Globin domain. At tyrosine 30 the chain carries Nitrated tyrosine. Serine 45 contributes to the heme b binding site. Serine 45 carries the phosphoserine modification. Position 63 (histidine 63) interacts with O2. Histidine 95 and lysine 98 together coordinate heme b. Tyrosine 136 is modified (nitrated tyrosine).

This sequence belongs to the plant globin family. As to quaternary structure, monomer. Post-translationally, nitrated in effective nodules and particularly in hypoxic conditions; this mechanism may play a protective role in the symbiosis by buffering toxic peroxynitrite NO(2)(-). Nitration level decrease during nodule senescence. In terms of processing, phosphorylation at Ser-45 disrupts the molecular environment of its porphyrin ring oxygen binding pocket, thus leading to a reduced oxygen consumption and to the delivery of oxygen O(2) to symbiosomes. In terms of tissue distribution, accumulates in root nodules after inoculation by bacteria of the genus Rhizobium. Expressed in mycorrhizal roots in the presence of the mycorrhizal fungus Glomus fasciculatum.

It is found in the cytoplasm. The protein resides in the cytosol. Its subcellular location is the nucleus. Its function is as follows. Leghemoglobin that reversibly binds oxygen O(2) through a pentacoordinated heme iron. In root nodules, facilitates the diffusion of oxygen to the bacteroids while preventing the bacterial nitrogenase from being inactivated by buffering dioxygen, nitric oxide and carbon monoxide, and promoting the formation of reactive oxygen species (ROS, e.g. H(2)O(2)). This role is essential for symbiotic nitrogen fixation (SNF). The polypeptide is Leghemoglobin 29 (Vicia faba (Broad bean)).